Here is a 555-residue protein sequence, read N- to C-terminus: Formate--tetrahydrofolate ligase (555 aa).

Residue 65 to 72 (TPAGEGKS) coordinates ATP.

It belongs to the formate--tetrahydrofolate ligase family.

The enzyme catalyses (6S)-5,6,7,8-tetrahydrofolate + formate + ATP = (6R)-10-formyltetrahydrofolate + ADP + phosphate. It functions in the pathway one-carbon metabolism; tetrahydrofolate interconversion. The sequence is that of Formate--tetrahydrofolate ligase from Staphylococcus carnosus (strain TM300).